Reading from the N-terminus, the 98-residue chain is ESAT-6-like protein EsxM (98 aa).

Belongs to the WXG100 family. CFP-10 subfamily.

The protein resides in the secreted. This is ESAT-6-like protein EsxM (esxM) from Mycobacterium bovis (strain ATCC BAA-935 / AF2122/97).